We begin with the raw amino-acid sequence, 342 residues long: Dihydroorotase (342 aa).

Residues histidine 13 and histidine 15 each contribute to the Zn(2+) site. Substrate contacts are provided by residues 15-17 (HLR) and asparagine 41. Lysine 99, histidine 136, and histidine 174 together coordinate Zn(2+). Lysine 99 carries the post-translational modification N6-carboxylysine. Histidine 136 contributes to the substrate binding site. Leucine 218 is a binding site for substrate. Position 246 (aspartate 246) interacts with Zn(2+). The active site involves aspartate 246. Substrate-binding residues include histidine 250 and alanine 262.

This sequence belongs to the metallo-dependent hydrolases superfamily. DHOase family. Class II DHOase subfamily. In terms of assembly, homodimer. Zn(2+) serves as cofactor.

The enzyme catalyses (S)-dihydroorotate + H2O = N-carbamoyl-L-aspartate + H(+). The protein operates within pyrimidine metabolism; UMP biosynthesis via de novo pathway; (S)-dihydroorotate from bicarbonate: step 3/3. In terms of biological role, catalyzes the reversible cyclization of carbamoyl aspartate to dihydroorotate. The protein is Dihydroorotase of Synechocystis sp. (strain ATCC 27184 / PCC 6803 / Kazusa).